We begin with the raw amino-acid sequence, 155 residues long: SsrA-binding protein (155 aa).

Positions 135 to 147 (TIKRRDQERDIKK) are enriched in basic and acidic residues. The segment at 135–155 (TIKRRDQERDIKKQMKHYNAR) is disordered.

It belongs to the SmpB family.

Its subcellular location is the cytoplasm. Its function is as follows. Required for rescue of stalled ribosomes mediated by trans-translation. Binds to transfer-messenger RNA (tmRNA), required for stable association of tmRNA with ribosomes. tmRNA and SmpB together mimic tRNA shape, replacing the anticodon stem-loop with SmpB. tmRNA is encoded by the ssrA gene; the 2 termini fold to resemble tRNA(Ala) and it encodes a 'tag peptide', a short internal open reading frame. During trans-translation Ala-aminoacylated tmRNA acts like a tRNA, entering the A-site of stalled ribosomes, displacing the stalled mRNA. The ribosome then switches to translate the ORF on the tmRNA; the nascent peptide is terminated with the 'tag peptide' encoded by the tmRNA and targeted for degradation. The ribosome is freed to recommence translation, which seems to be the essential function of trans-translation. The sequence is that of SsrA-binding protein from Streptococcus pyogenes serotype M12 (strain MGAS2096).